Consider the following 148-residue polypeptide: MKVILKEDVKGLGKKESLVEVSDGYARNFLIPKGLAVEATAANINIMQTKKEAEKNRKERELAQAKELAEKLKGIVVTLKAKAGENGKLFGSMTSKDVSDYLKKQHNLDIDKKKISLPESMKSLGTYEAEVKLYPGVSAKLTVKIEQE.

The protein belongs to the bacterial ribosomal protein bL9 family.

In terms of biological role, binds to the 23S rRNA. This chain is Large ribosomal subunit protein bL9, found in Acetivibrio thermocellus (strain ATCC 27405 / DSM 1237 / JCM 9322 / NBRC 103400 / NCIMB 10682 / NRRL B-4536 / VPI 7372) (Clostridium thermocellum).